Here is a 686-residue protein sequence, read N- to C-terminus: Glycogenin (686 aa).

The UDP site is built by L13, N16, Y19, and R82. Residues L13, N16, Y19, R82, K91, D107, A108, D109, N139, T140, D166, D169, and Q170 each contribute to the UDP-alpha-D-glucose site. Residues D107, A108, and D109 each contribute to the UDP site. D107 lines the Mn(2+) pocket. D109 provides a ligand contact to Mn(2+). Residues Y196 and Y198 are each glycosylated (O-linked (Glc...) tyrosine). Residues H213, G216, and K219 each contribute to the UDP site. H213 is a Mn(2+) binding site. Residues G216 and K219 each contribute to the UDP-alpha-D-glucose site. Disordered regions lie at residues 264-331, 381-444, 460-533, and 603-686; these read VKGE…ANFP, PEPT…RGNA, KHRR…GVPA, and KPLR…VLET. Low complexity-rich tracts occupy residues 285-308 and 398-416; these read SSQS…YTSH and SAAS…ASPT. The not required for catalytic activity stretch occupies residues 307 to 686; sequence SHGASWDASR…TEEERDVLET (380 aa). Composition is skewed to polar residues over residues 424-442 and 471-483; these read VTPT…TTRG and AATS…GRAQ. The span at 677-686 shows a compositional bias: acidic residues; the sequence is TEEERDVLET.

Belongs to the glycosyltransferase 8 family. Glycogenin subfamily. Interacts with glycogen synthase gsy-1; the interaction is direct. Mn(2+) serves as cofactor.

The protein resides in the cytoplasm. It localises to the vacuole. The enzyme catalyses L-tyrosyl-[glycogenin] + UDP-alpha-D-glucose = alpha-D-glucosyl-L-tyrosyl-[glycogenin] + UDP + H(+). It catalyses the reaction [1,4-alpha-D-glucosyl](n)-L-tyrosyl-[glycogenin] + UDP-alpha-D-glucose = [1,4-alpha-D-glucosyl](n+1)-L-tyrosyl-[glycogenin] + UDP + H(+). Its function is as follows. Self-glucosylating initiator of glycogen synthesis. It catalyzes the formation of a short alpha (1,4)-glucosyl chain covalently attached via a glucose 1-O-tyrosyl linkage to internal tyrosine residues and these chains act as primers for the elongation reaction catalyzed by glycogen synthase. This is Glycogenin from Neurospora crassa (strain ATCC 24698 / 74-OR23-1A / CBS 708.71 / DSM 1257 / FGSC 987).